The primary structure comprises 143 residues: Large ribosomal subunit protein uL15 (143 aa).

A disordered region spans residues 1-56; the sequence is MQLNSIKPAAGAKHAKRRVGRGIGSGLGKTAGRGHKGQKSRAGGYHKVGFEGGQMP. The segment covering 21-31 has biased composition (gly residues); that stretch reads RGIGSGLGKTA.

It belongs to the universal ribosomal protein uL15 family. In terms of assembly, part of the 50S ribosomal subunit.

Functionally, binds to the 23S rRNA. The protein is Large ribosomal subunit protein uL15 of Verminephrobacter eiseniae (strain EF01-2).